The following is a 152-amino-acid chain: ASP external chaperone (152 aa).

An N-terminal signal peptide occupies residues 1–22 (MNKPVTLLLATLLAPLSGQLCA).

Forms a complex with the serine protease ASP in the periplasm. After translocation of the ASP-ORF2 complex from the periplasm to the extracellular space, the complex is dissociated in a pH-dependent manner.

The protein localises to the periplasm. It is found in the secreted. With respect to regulation, degraded by ASP after secretion and dissociation of the ASP-ORF2 complex. Required for the production of the active form of the Aeromonas extracellular serine protease (ASP). Acts as a chaperone that helps ASP form an active structure in the periplasm. Formation of a complex with ASP in the periplasm also inactivates the protease activity and likely protects ASP from intrinsic proteases. Dissociation of the ASP-ORF2 complex after secretion in the extracellular space generates an active ASP. The polypeptide is ASP external chaperone (Aeromonas sobria).